The sequence spans 524 residues: Acetyl-CoA decarbonylase/synthase complex subunit beta (524 aa).

Residues Cys212, Cys215, Cys301, and Cys303 each contribute to the [Ni-Fe-S] cluster site. The segment at 436 to 466 (WVEEEEEEAEEVAEEAAAEAAPAAQPAQAAQ) is disordered. The segment covering 437 to 452 (VEEEEEEAEEVAEEAA) has biased composition (acidic residues). The segment covering 453-466 (AEAAPAAQPAQAAQ) has biased composition (low complexity).

This sequence belongs to the CdhC family. As to quaternary structure, monomer. The ACDS complex is made up of alpha, epsilon, beta, gamma and delta chains with a probable stoichiometry of (alpha(2)epsilon(2))(4)-beta(8)-(gamma(1)delta(1))(8). [Ni-Fe-S] cluster serves as cofactor.

It catalyses the reaction Co(I)-[corrinoid Fe-S protein] + acetyl-CoA + H(+) = methyl-Co(III)-[corrinoid Fe-S protein] + CO + CoA. In terms of biological role, part of a complex that catalyzes the reversible cleavage of acetyl-CoA, allowing autotrophic growth from CO(2). The alpha-epsilon complex generates CO from CO(2), while the beta subunit (this protein) combines the CO with CoA and a methyl group to form acetyl-CoA. The methyl group, which is incorporated into acetyl-CoA, is transferred to the beta subunit by a corrinoid iron-sulfur protein (the gamma-delta complex). The sequence is that of Acetyl-CoA decarbonylase/synthase complex subunit beta from Archaeoglobus fulgidus (strain ATCC 49558 / DSM 4304 / JCM 9628 / NBRC 100126 / VC-16).